The chain runs to 100 residues: Eukaryotic translation initiation factor 4E-binding protein 3 (100 aa).

The short motif at 40-46 is the YXXXXLphi motif element; it reads YDRKFLL. A disordered region spans residues 81–100; sequence LKEQETEEEIPDDAQFEMDI. A compositionally biased stretch (acidic residues) spans 85–100; the sequence is ETEEEIPDDAQFEMDI. The short motif at 96-100 is the TOS motif element; that stretch reads FEMDI.

The protein belongs to the eIF4E-binding protein family. In terms of assembly, interacts with EIF4E. Interacts with RPA2 (in unphosphorylated form via N-terminus); the interaction enhances EIF4EBP3-mediated inhibition of EIF4E-mediated mRNA nuclear export. In terms of processing, phosphorylated. In terms of tissue distribution, expression is highest in skeletal muscle, heart, kidney, and pancreas, whereas there is very little expression in brain and thymus.

Its subcellular location is the cytoplasm. The protein resides in the nucleus. Functionally, repressor of translation initiation that regulates EIF4E activity by preventing its assembly into the eIF4F complex: the hypophosphorylated form competes with EIF4G1/EIF4G3 and strongly binds to EIF4E, leading to repression of translation. In contrast, the hyperphosphorylated form dissociates from EIF4E, allowing interaction between EIF4G1/EIF4G3 and EIF4E, leading to initiation of translation. Inhibits EIF4E-mediated mRNA nuclear export. This is Eukaryotic translation initiation factor 4E-binding protein 3 (EIF4EBP3) from Homo sapiens (Human).